Consider the following 79-residue polypeptide: Small ribosomal subunit protein bS18 (79 aa).

It belongs to the bacterial ribosomal protein bS18 family. As to quaternary structure, part of the 30S ribosomal subunit. Forms a tight heterodimer with protein bS6.

In terms of biological role, binds as a heterodimer with protein bS6 to the central domain of the 16S rRNA, where it helps stabilize the platform of the 30S subunit. This is Small ribosomal subunit protein bS18 from Rhodopseudomonas palustris (strain BisB18).